We begin with the raw amino-acid sequence, 221 residues long: UPF0758 protein YicR (221 aa).

An MPN domain is found at 99 to 221 (ALLSPEMTRE…YVSFAERGWI (123 aa)). Zn(2+) contacts are provided by His170, His172, and Asp183. Positions 170–183 (HNHPSGCAEPSKAD) match the JAMM motif motif.

Belongs to the UPF0758 family. YicR subfamily.

The polypeptide is UPF0758 protein YicR (Salmonella agona (strain SL483)).